Consider the following 605-residue polypeptide: Granule-bound starch synthase 1, chloroplastic/amyloplastic (605 aa).

Residues 1 to 72 (MAALATSQLV…GGRFPSLVVC (72 aa)) constitute a chloroplast transit peptide. K91 contributes to the ADP-alpha-D-glucose binding site.

Belongs to the glycosyltransferase 1 family. Bacterial/plant glycogen synthase subfamily.

It localises to the plastid. The protein localises to the chloroplast. Its subcellular location is the amyloplast. It catalyses the reaction an NDP-alpha-D-glucose + [(1-&gt;4)-alpha-D-glucosyl](n) = [(1-&gt;4)-alpha-D-glucosyl](n+1) + a ribonucleoside 5'-diphosphate + H(+). Its pathway is glycan biosynthesis; starch biosynthesis. Required for the synthesis of amylose in endosperm. The chain is Granule-bound starch synthase 1, chloroplastic/amyloplastic (WAXY) from Zea mays (Maize).